A 1651-amino-acid polypeptide reads, in one-letter code: Protein Wiz (1651 aa).

Residues 1–79 (MEGSLAGSLA…TPDGRGPWEH (79 aa)) form a disordered region. Residues Ala11, Arg14, Asn29, Gly32, Gly39, Gly42, and Glu258 each participate in a glycyl lysine isopeptide (Lys-Gly) (interchain with G-Cter in SUMO2) cross-link. 3 C2H2-type zinc fingers span residues 267–289 (FPCI…MSQH), 304–326 (LACG…RQLH), and 353–375 (LQCP…AKLH). Phe313 participates in a covalent cross-link: Glycyl lysine isopeptide (Lys-Gly) (interchain with G-Cter in SUMO2). The interval 376–399 (MREPPGQTTKEPFGGSSGAGSPSP) is disordered. Over residues 386 to 399 (EPFGGSSGAGSPSP) the composition is skewed to low complexity. A C2H2-type 4 zinc finger spans residues 416-439 (SACVFCGFPAPSESLLREHVRLVH). A disordered region spans residues 546–578 (LGRNKSTVHPQGLGERRRPWSEEEEEEEEEEDV). The span at 567–578 (EEEEEEEEEEDV) shows a compositional bias: acidic residues. C2H2-type zinc fingers lie at residues 701 to 723 (RKCP…VRGH) and 769 to 791 (MRCD…ARAH). The interval 819-843 (AEQPPSPLGREPGGPPGSFLTSRRP) is disordered. Residues 870–892 (TTCEVCGACFETRKGLSSHARSH) form a C2H2-type 7 zinc finger. Residues Lys883, Lys939, Lys955, Lys967, and Lys988 each participate in a glycyl lysine isopeptide (Lys-Gly) (interchain with G-Cter in SUMO2) cross-link. The disordered stretch occupies residues 972–1038 (FSAKGLGHPP…GPLNLTSGPE (67 aa)). Low complexity predominate over residues 984 to 994 (PLLKKTPLALA). Position 996 is a phosphoserine (Ser996). Position 998 is a phosphothreonine (Thr998). Glycyl lysine isopeptide (Lys-Gly) (interchain with G-Cter in SUMO2) cross-links involve residues Lys1000 and Lys1005. 4 positions are modified to phosphoserine: Ser1006, Ser1012, Ser1017, and Ser1025. Residues 1030–1034 (PLNLT) form an interaction with CTBP1 and CTBP2 1 region. Residues 1043-1065 (IRCEFCGEFFENRKGLSSHARSH) form a C2H2-type 8 zinc finger. A Glycyl lysine isopeptide (Lys-Gly) (interchain with G-Cter in SUMO2) cross-link involves residue Lys1056. Phosphoserine is present on residues Ser1079 and Ser1106. Positions 1091–1174 (RTQSRPGGPP…PGLAAPSLPK (84 aa)) are disordered. Positions 1097-1106 (GGPPNPPGPS) are enriched in pro residues. Residues Lys1108 and Lys1112 each participate in a glycyl lysine isopeptide (Lys-Gly) (interchain with G-Cter in SUMO2) cross-link. Residues Ser1122, Ser1127, and Ser1134 each carry the phosphoserine modification. Residues Lys1138 and Lys1139 each participate in a glycyl lysine isopeptide (Lys-Gly) (interchain with G-Cter in SUMO2) cross-link. Ser1146 and Ser1151 each carry phosphoserine. Residue Lys1162 is modified to N6,N6,N6-trimethyllysine; by EHMT2; alternate. Position 1162 is an N6,N6-dimethyllysine; by EHMT2; alternate (Lys1162). Residue Lys1177 forms a Glycyl lysine isopeptide (Lys-Gly) (interchain with G-Cter in SUMO2) linkage. The tract at residues 1214-1218 (PLNLS) is interaction with CTBP1 and CTBP2 2. Residues 1227–1249 (IRCEFCGEFFENRKGLSSHARSH) form a C2H2-type 9 zinc finger. A Glycyl lysine isopeptide (Lys-Gly) (interchain with G-Cter in SUMO2) cross-link involves residue Lys1240. Ser1263 bears the Phosphoserine mark. Residue Lys1282 forms a Glycyl lysine isopeptide (Lys-Gly) (interchain with G-Cter in SUMO2) linkage. The segment at 1283 to 1331 (KEPPAGDLAPALAEDGPPTVAPGPVQSPLPLSPLAGRPGKPGAGPAQVP) is disordered. Positions 1301-1313 (TVAPGPVQSPLPL) are enriched in pro residues. A phosphoserine mark is found at Ser1309 and Ser1314. The segment covering 1315–1328 (PLAGRPGKPGAGPA) has biased composition (low complexity). Glycyl lysine isopeptide (Lys-Gly) (interchain with G-Cter in SUMO2) cross-links involve residues Lys1343, Lys1356, Lys1370, Lys1372, and Lys1382. A C2H2-type 10 zinc finger spans residues 1397–1419 (ACCELCGLYFENRKALASHARAH). Glycyl lysine isopeptide (Lys-Gly) (interchain with G-Cter in SUMO2) cross-links involve residues Lys1448, Lys1464, and Lys1477. The tract at residues 1463 to 1554 (TKKFRSAGHG…ASAARGGEDT (92 aa)) is disordered. A Phosphoserine modification is found at Ser1480. Positions 1481 to 1493 (LGLAPGGLAVVGR) are enriched in low complexity. Ser1517 is modified (phosphoserine). Lys1523 participates in a covalent cross-link: Glycyl lysine isopeptide (Lys-Gly) (interchain with G-Cter in SUMO1); alternate. Lys1523 participates in a covalent cross-link: Glycyl lysine isopeptide (Lys-Gly) (interchain with G-Cter in SUMO2); alternate. The segment covering 1523–1541 (KAEEHQRQNINKFERRQAR) has biased composition (basic and acidic residues). Glycyl lysine isopeptide (Lys-Gly) (interchain with G-Cter in SUMO2) cross-links involve residues Lys1534 and Lys1560. Residues 1596–1622 (LKCRFCEVEFQGPLSIQEEWVRHLQRH) form a C2H2-type 11 zinc finger. A disordered region spans residues 1629–1651 (SKADPPPEESQAPQAQTAAAEAP). Lys1630 is covalently cross-linked (Glycyl lysine isopeptide (Lys-Gly) (interchain with G-Cter in SUMO2)). Positions 1637 to 1651 (ESQAPQAQTAAAEAP) are enriched in low complexity.

This sequence belongs to the krueppel C2H2-type zinc-finger protein family. In terms of assembly, interacts with EHMT1, EHMT2, CTBP1 and CTBP2. Part of a complex containing at least CDYL, REST, WIZ, SETB1, EHMT1 and EHMT2.

The protein localises to the nucleus. In terms of biological role, may link EHMT1 and EHMT2 histone methyltransferases to the CTBP corepressor machinery. May be involved in EHMT1-EHMT2 heterodimer formation and stabilization. The chain is Protein Wiz (WIZ) from Homo sapiens (Human).